The following is a 313-amino-acid chain: Protein-glutamine deamidase Cif (313 aa).

Residues Cys-128, His-186, and Gln-205 contribute to the active site.

Belongs to the Cif family.

It localises to the secreted. The protein resides in the host nucleus. It carries out the reaction L-glutaminyl-[protein] + H2O = L-glutamyl-[protein] + NH4(+). Functionally, protein-glutamine deamidase effector that inhibits the host cell cycle and other key cellular processes such as the actin network and programmed-cell death. Acts by mediating the side chain deamidation of 'Gln-40' of host NEDD8, converting it to glutamate, thereby abolishing the activity of cullin-RING-based E3 ubiquitin-protein ligase complexes (CRL complexes). Inactivation of CRL complexes prevents ubiquitination and subsequent degradation of the cyclin-dependent kinase inhibitors CDKN1A/p21 and CDKN1B/p27, leading to G1 and G2 cell cycle arrests in host cells. Deamidation of 'Gln-40' of host NEDD8 also triggers macrophage-specific programmed cell death. Also able to catalyze deamidation of 'Gln-40' of host ubiquitin in vitro; however, NEDD8 constitutes the preferred substrate in vivo. The chain is Protein-glutamine deamidase Cif from Photorhabdus laumondii subsp. laumondii (strain DSM 15139 / CIP 105565 / TT01) (Photorhabdus luminescens subsp. laumondii).